Consider the following 525-residue polypeptide: Coronin-2A (525 aa).

WD repeat units lie at residues 24–71, 72–122, 123–170, 171–214, 215–259, 260–305, and 306–342; these read NCYD…TGKL, DPHY…RNLT, AYRK…SVIT, SPMS…AGTV, LQEA…DNLS, VPLM…ADKP, and HLSYLTEYRSYNPQKGIGVMPKRGLDVSSCEIFRFYK. A coiled-coil region spans residues 485 to 524; the sequence is QMFYRQQEEIRRLRELLTQREVQAKQLELEIKNLRMGSEQ.

The protein belongs to the WD repeat coronin family. Binds actin. Component of the N-Cor repressor complex, at least composed of NCOR1, NCOR2, HDAC3, TBL1X, TBL1R, CORO2A and GPS2.

In Homo sapiens (Human), this protein is Coronin-2A (CORO2A).